The primary structure comprises 414 residues: Serine hydroxymethyltransferase (414 aa).

(6S)-5,6,7,8-tetrahydrofolate contacts are provided by residues Leu-116 and Gly-120 to Leu-122. Lys-224 carries the post-translational modification N6-(pyridoxal phosphate)lysine. Residues Glu-240 and Ser-348–Phe-350 each bind (6S)-5,6,7,8-tetrahydrofolate.

The protein belongs to the SHMT family. Homodimer. Requires pyridoxal 5'-phosphate as cofactor.

It localises to the cytoplasm. It catalyses the reaction (6R)-5,10-methylene-5,6,7,8-tetrahydrofolate + glycine + H2O = (6S)-5,6,7,8-tetrahydrofolate + L-serine. It functions in the pathway one-carbon metabolism; tetrahydrofolate interconversion. Its pathway is amino-acid biosynthesis; glycine biosynthesis; glycine from L-serine: step 1/1. Its function is as follows. Catalyzes the reversible interconversion of serine and glycine with tetrahydrofolate (THF) serving as the one-carbon carrier. This reaction serves as the major source of one-carbon groups required for the biosynthesis of purines, thymidylate, methionine, and other important biomolecules. Also exhibits THF-independent aldolase activity toward beta-hydroxyamino acids, producing glycine and aldehydes, via a retro-aldol mechanism. The polypeptide is Serine hydroxymethyltransferase (Campylobacter fetus subsp. fetus (strain 82-40)).